Reading from the N-terminus, the 252-residue chain is Hydroxyacylglutathione hydrolase (252 aa).

His-54, His-56, Asp-58, His-59, His-111, Asp-130, and His-170 together coordinate Zn(2+).

Belongs to the metallo-beta-lactamase superfamily. Glyoxalase II family. As to quaternary structure, monomer. The cofactor is Zn(2+).

The enzyme catalyses an S-(2-hydroxyacyl)glutathione + H2O = a 2-hydroxy carboxylate + glutathione + H(+). The protein operates within secondary metabolite metabolism; methylglyoxal degradation; (R)-lactate from methylglyoxal: step 2/2. Its function is as follows. Thiolesterase that catalyzes the hydrolysis of S-D-lactoyl-glutathione to form glutathione and D-lactic acid. This Francisella philomiragia subsp. philomiragia (strain ATCC 25017 / CCUG 19701 / FSC 153 / O#319-036) protein is Hydroxyacylglutathione hydrolase.